We begin with the raw amino-acid sequence, 881 residues long: Probable intermembrane transport protein HI_1672 (881 aa).

The helical transmembrane segment at 30-49 (FWLLPFIALCIGAILFFQIV) threads the bilayer.

Belongs to the PqiB family.

Its subcellular location is the cell inner membrane. The chain is Probable intermembrane transport protein HI_1672 from Haemophilus influenzae (strain ATCC 51907 / DSM 11121 / KW20 / Rd).